Consider the following 525-residue polypeptide: Protein disulfide-isomerase A2 (525 aa).

An N-terminal signal peptide occupies residues M1 to G21. Residues R27–G152 form the Thioredoxin 1 domain. Catalysis depends on nucleophile residues C71 and C74. A disulfide bond links C71 and C74. 2 N-linked (GlcNAc...) asparagine glycosylation sites follow: N127 and N284. In terms of domain architecture, Thioredoxin 2 spans V367–V496. Residues C418 and C421 each act as nucleophile in the active site. C418 and C421 are joined by a disulfide. The tract at residues D492 to L525 is disordered. Residues E505–P514 show a composition bias toward pro residues. A glycan (N-linked (GlcNAc...) asparagine) is linked at N516. Polar residues predominate over residues N516 to L525. Residues K522–L525 carry the Prevents secretion from ER motif.

It belongs to the protein disulfide isomerase family. As to quaternary structure, monomer; predominantly as monomer under reducing conditions. Homodimer; disulfide-linked. Part of a large chaperone multiprotein complex comprising DNAJB11, HSP90B1, HSPA5, HYOU, PDIA2, PDIA4, PDIA6, PPIB, SDF2L1, UGGT1 and very small amounts of ERP29, but not, or at very low levels, CALR nor CANX. The disulfide-linked homodimer exhibits an enhanced chaperone activity. In terms of processing, glycosylated. Highly expressed in pancreas (at protein level).

It is found in the endoplasmic reticulum lumen. The catalysed reaction is Catalyzes the rearrangement of -S-S- bonds in proteins.. Acts as an intracellular estrogen-binding protein. May be involved in modulating cellular levels and biological functions of estrogens in the pancreas. May act as a chaperone that inhibits aggregation of misfolded proteins. In Homo sapiens (Human), this protein is Protein disulfide-isomerase A2 (PDIA2).